A 378-amino-acid polypeptide reads, in one-letter code: D-alanine--D-alanine ligase (378 aa).

Residues 140 to 346 (KKIISQAGIR…YSDLIDRLIQ (207 aa)) enclose the ATP-grasp domain. Position 170-225 (170-225 (EEKLGNLTFVKPAKQGSSVGIHRVTNAEEYEKALDDAFKYDYKILVEQGIANPQEI)) interacts with ATP. Residues D300, E313, and N315 each contribute to the Mg(2+) site.

It belongs to the D-alanine--D-alanine ligase family. The cofactor is Mg(2+). Mn(2+) is required as a cofactor.

The protein resides in the cytoplasm. The enzyme catalyses 2 D-alanine + ATP = D-alanyl-D-alanine + ADP + phosphate + H(+). It functions in the pathway cell wall biogenesis; peptidoglycan biosynthesis. Cell wall formation. The chain is D-alanine--D-alanine ligase from Limosilactobacillus reuteri (strain DSM 20016) (Lactobacillus reuteri).